A 109-amino-acid polypeptide reads, in one-letter code: Period circadian protein (109 aa).

The interval 59–109 is disordered; sequence CFEGSGGSGSSGNFTSGSNLNMRSVTNTSNTGTGTSSESVPLVTLTEALIS. Residues 69-98 show a composition bias toward low complexity; that stretch reads SGNFTSGSNLNMRSVTNTSNTGTGTSSESV.

Forms a heterodimer with timeless (TIM); the complex then translocates into the nucleus. In terms of processing, phosphorylated with a circadian rhythmicity, probably by the double-time protein (dbt). Phosphorylation could be implicated in the stability of per monomer and in the formation of heterodimer per-tim.

It localises to the nucleus. The protein resides in the cytoplasm. It is found in the perinuclear region. In terms of biological role, essential for biological clock functions. Determines the period length of circadian and ultradian rhythms; an increase in PER dosage leads to shortened circadian rhythms and a decrease leads to lengthened circadian rhythms. Essential for the circadian rhythmicity of locomotor activity, eclosion behavior, and for the rhythmic component of the male courtship song that originates in the thoracic nervous system. The biological cycle depends on the rhythmic formation and nuclear localization of the TIM-PER complex. Light induces the degradation of TIM, which promotes elimination of PER. Nuclear activity of the heterodimer coordinatively regulates PER and TIM transcription through a negative feedback loop. Behaves as a negative element in circadian transcriptional loop. Does not appear to bind DNA, suggesting indirect transcriptional inhibition. The chain is Period circadian protein (per) from Syritta pipiens (Hoverfly).